The following is a 161-amino-acid chain: Phage-like element PBSX protein XkdI (161 aa).

To B.subtilis YqbI.

This is Phage-like element PBSX protein XkdI (xkdI) from Bacillus subtilis (strain 168).